A 598-amino-acid chain; its full sequence is Elongation factor 4 (598 aa).

The tr-type G domain maps to 4–186 (SRLRNFSIIA…EIVKKIPPPK (183 aa)). GTP is bound by residues 16 to 21 (DHGKST) and 133 to 136 (NKID).

Belongs to the TRAFAC class translation factor GTPase superfamily. Classic translation factor GTPase family. LepA subfamily.

The protein resides in the cell inner membrane. The enzyme catalyses GTP + H2O = GDP + phosphate + H(+). In terms of biological role, required for accurate and efficient protein synthesis under certain stress conditions. May act as a fidelity factor of the translation reaction, by catalyzing a one-codon backward translocation of tRNAs on improperly translocated ribosomes. Back-translocation proceeds from a post-translocation (POST) complex to a pre-translocation (PRE) complex, thus giving elongation factor G a second chance to translocate the tRNAs correctly. Binds to ribosomes in a GTP-dependent manner. This Pelobacter propionicus (strain DSM 2379 / NBRC 103807 / OttBd1) protein is Elongation factor 4.